We begin with the raw amino-acid sequence, 521 residues long: Probable protein kinase UbiB (521 aa).

One can recognise a Protein kinase domain in the interval 119 to 497; that stretch reads SFDRQPVASA…QKRTNRLLQS (379 aa). Residues 125–133 and Lys151 each bind ATP; that span reads VASASIAQV. Residue Asp286 is the Proton acceptor of the active site. A helical transmembrane segment spans residues 496 to 516; that stretch reads QSLIYGGLGFVLGLLVMQLFV.

Belongs to the ABC1 family. UbiB subfamily.

It localises to the cell inner membrane. Its pathway is cofactor biosynthesis; ubiquinone biosynthesis [regulation]. Is probably a protein kinase regulator of UbiI activity which is involved in aerobic coenzyme Q (ubiquinone) biosynthesis. The polypeptide is Probable protein kinase UbiB (Acidovorax sp. (strain JS42)).